A 2175-amino-acid chain; its full sequence is Homeobox protein cut (2175 aa).

Disordered stretches follow at residues 139–170 and 249–432; these read NLLA…QQSG and GNVK…GQPA. Composition is skewed to low complexity over residues 153–169 and 249–268; these read LLSA…LQQS and GNVK…SNNS. Residues 265 to 343 adopt a coiled-coil conformation; the sequence is SNNSHQDEEE…ENKDAGEASL (79 aa). Acidic residues predominate over residues 271 to 294; that stretch reads DEEELDDEEEDEEEDEDEDDEEEN. A compositionally biased stretch (polar residues) spans 309-320; that stretch reads QQETRTEPSATT. Over residues 344-359 the composition is skewed to low complexity; sequence NVSNNHNTTDSNNSCS. The span at 360-374 shows a compositional bias: polar residues; that stretch reads RKNNNGGNESEQHVA. Residues 384 to 415 show a composition bias toward low complexity; it reads NNNTNTSNNNNTSNTATSNTNNNNNNNSSSGN. A coiled-coil region spans residues 433–499; it reads VLLAAKDKEI…NEALAEATAL (67 aa). The span at 503–515 shows a compositional bias: low complexity; it reads ASTNNNNNSQSSD. Disordered stretches follow at residues 503–600 and 656–765; these read ASTN…KIKK and ASDA…NTNA. Residues 546 to 568 show a composition bias toward acidic residues; it reads AEDDEEDEDQAMLVDSEEAEDKP. Residues 673 to 696 show a composition bias toward basic residues; sequence QQQHQHQQQHHQQQHLHQQHHHHL. The segment covering 697 to 710 has biased composition (low complexity); sequence QQQPNSGSNSNPAS. Over residues 714–735 the composition is skewed to basic residues; it reads HHGHHLHGHGLLHPSSAHHLHH. Positions 738-765 are enriched in low complexity; sequence TESNSNSSTPTAAGNNNGSNNSSSNTNA. The CUT 1 DNA-binding region spans 877 to 964; it reads NMDKYANQAL…VMLLKSLIPK (88 aa). Disordered regions lie at residues 1001-1083 and 1197-1289; these read LMKQ…HDDQ and QRSS…EFAA. 2 stretches are compositionally biased toward basic and acidic residues: residues 1009–1030 and 1062–1083; these read QHRE…EDSK and QRER…HDDQ. Positions 1056–1161 form a coiled coil; sequence EQAAAQQRER…QQQAAQAQAQ (106 aa). Positions 1249–1282 are enriched in low complexity; it reads GAPPTAAPPTGGASSNSAAPSPLSNSILPPALSS. The CUT 2 DNA-binding region spans 1330 to 1417; sequence QQQFDMFNNL…VHKLVASQYK (88 aa). Residues 1463-1522 are a coiled coil; sequence AQAQHLMQQMQAAAMSAAMQQQQVAQAQQQAQQAQQAQQHLQQQAQQHLQQQQHLAQQQH. Residues 1507 to 1540 show a composition bias toward low complexity; sequence AQQHLQQQQHLAQQQHPHQQHHQAAAAAAALHHQ. Disordered regions lie at residues 1507-1588, 1695-1747, 1803-1826, 1922-1955, 2069-2097, and 2113-2175; these read AQQH…PMLM, ERRE…PSKK, QVPH…ATPF, RSDD…DKTT, KQEE…QKLK, and SSTG…GWNY. A compositionally biased stretch (gly residues) spans 1564-1573; the sequence is AQPGGPGGNQ. The segment at residues 1608–1695 is a DNA-binding region (CUT 3); that stretch reads YEMAALTQDL…VERLQLLKNE (88 aa). The span at 1709–1732 shows a compositional bias: low complexity; sequence NQQDNSSDTSSNDTNDFYTSSPGP. The segment at residues 1745–1804 is a DNA-binding region (homeobox); sequence SKKQRVLFSEEQKEALRLAFALDPYPNVGTIEFLANELGLATRTITNWFHNHRMRLKQQV. Ser-1940 and Ser-1944 each carry phosphoserine. Pro residues predominate over residues 2126-2135; sequence PLAPPPPPPA. Residues 2136-2175 are compositionally biased toward low complexity; that stretch reads ASSSIVSGESTTSSSSSSNTSSSTPAVTTAAATAAAGWNY.

The protein belongs to the CUT homeobox family. Detected in many cells in the central nervous system, all external sensory organs, some peripheral neurons, and in the non-neural cells of the spiracles and the Malpighian tubules.

The protein resides in the nucleus. In terms of biological role, regulator of cell fate decisions in multiple lineages. Specifically, functions as a determination factor that specifies sensory organ identity in precursor cells. Probably also involved in cell type specification of Malpighian tubules. In absence of cut gene external sensory organs are transformed into chordotonal organs. The polypeptide is Homeobox protein cut (ct) (Drosophila melanogaster (Fruit fly)).